The chain runs to 153 residues: Arginine repressor (153 aa).

The protein belongs to the ArgR family.

The protein resides in the cytoplasm. It functions in the pathway amino-acid biosynthesis; L-arginine biosynthesis [regulation]. Functionally, regulates arginine biosynthesis genes. The protein is Arginine repressor of Acetivibrio thermocellus (strain ATCC 27405 / DSM 1237 / JCM 9322 / NBRC 103400 / NCIMB 10682 / NRRL B-4536 / VPI 7372) (Clostridium thermocellum).